Consider the following 587-residue polypeptide: Zinc finger protein 69 (587 aa).

Positions 42 to 128 are disordered; the sequence is NGTQQESLAD…TPGTTAAGSQ (87 aa). The region spanning 76 to 147 is the KRAB domain; that stretch reads HDEATPGTPA…VDLSQEEWGQ (72 aa). 9 C2H2-type zinc fingers span residues 271-293, 299-321, 327-349, 355-377, 383-405, 411-433, 439-461, 467-489, and 495-517; these read HKKK…ILEQ, KPAR…CMRA, NVCE…HTGE, KECG…HTGE, EECG…HTGE, DKCQ…HSGE, SECG…HTGE, TSCC…HTGE, and KECG…HTGV. Residues 564–587 are disordered; the sequence is SRHQKIHRRNTFRDDPGHENKRQL. Basic and acidic residues predominate over residues 574-587; sequence TFRDDPGHENKRQL.

The protein belongs to the krueppel C2H2-type zinc-finger protein family.

Its subcellular location is the nucleus. Functionally, putative transcription factor that appears to regulate lipid metabolism. This Mus musculus (Mouse) protein is Zinc finger protein 69.